The primary structure comprises 149 residues: Calmodulin (149 aa).

Position 2 is an N-acetylalanine (Ala2). EF-hand domains lie at 8–43, 44–79, 81–116, and 117–149; these read EQIA…LGQN, PTEA…KMKD, DSEE…LGEK, and LTDE…MTNK. Ca(2+)-binding residues include Asp21, Asp23, Asp25, Thr27, Glu32, Asp57, Asp59, Asn61, Thr63, Glu68, Asp94, Asp96, Asn98, and Glu105. An N6,N6,N6-trimethyllysine modification is found at Lys116. Ca(2+)-binding residues include Asp130, Asp132, Asp134, Gln136, and Glu141.

Belongs to the calmodulin family.

Functionally, calmodulin mediates the control of a large number of enzymes, ion channels and other proteins by Ca(2+). Among the enzymes to be stimulated by the calmodulin-Ca(2+) complex are a number of protein kinases and phosphatases. The chain is Calmodulin from Ciona intestinalis (Transparent sea squirt).